The following is a 279-amino-acid chain: Oxygen-dependent coproporphyrinogen-III oxidase (279 aa).

Serine 102 contacts substrate. 2 residues coordinate a divalent metal cation: histidine 106 and histidine 116. Histidine 116 functions as the Proton donor in the catalytic mechanism. Residue 118 to 120 (NTR) coordinates substrate. A divalent metal cation-binding residues include histidine 149 and histidine 179. An important for dimerization region spans residues 244–279 (YVEFNLLYDRGTKFGLMTDGNVEAILMSLPPEVKFN).

The protein belongs to the aerobic coproporphyrinogen-III oxidase family. As to quaternary structure, homodimer. The cofactor is a divalent metal cation.

Its subcellular location is the cytoplasm. It carries out the reaction coproporphyrinogen III + O2 + 2 H(+) = protoporphyrinogen IX + 2 CO2 + 2 H2O. The protein operates within porphyrin-containing compound metabolism; protoporphyrin-IX biosynthesis; protoporphyrinogen-IX from coproporphyrinogen-III (O2 route): step 1/1. In terms of biological role, involved in the heme biosynthesis. Catalyzes the aerobic oxidative decarboxylation of propionate groups of rings A and B of coproporphyrinogen-III to yield the vinyl groups in protoporphyrinogen-IX. The chain is Oxygen-dependent coproporphyrinogen-III oxidase from Rickettsia rickettsii (strain Iowa).